The sequence spans 217 residues: 2-phospho-L-lactate guanylyltransferase (217 aa).

Belongs to the CofC family. In terms of assembly, homodimer.

It carries out the reaction (2S)-2-phospholactate + GTP + H(+) = (2S)-lactyl-2-diphospho-5'-guanosine + diphosphate. It functions in the pathway cofactor biosynthesis; coenzyme F420 biosynthesis. Its function is as follows. Guanylyltransferase that catalyzes the activation of (2S)-2-phospholactate (2-PL) as (2S)-lactyl-2-diphospho-5'-guanosine, via the condensation of 2-PL with GTP. It is involved in the biosynthesis of coenzyme F420, a hydride carrier cofactor. The polypeptide is 2-phospho-L-lactate guanylyltransferase (Methanospirillum hungatei JF-1 (strain ATCC 27890 / DSM 864 / NBRC 100397 / JF-1)).